A 67-amino-acid polypeptide reads, in one-letter code: Protein AaeX (67 aa).

2 helical membrane passes run Val-8 to Phe-28 and Pro-47 to Ile-67.

Belongs to the AaeX family.

Its subcellular location is the cell membrane. This chain is Protein AaeX, found in Edwardsiella piscicida.